Reading from the N-terminus, the 358-residue chain is Methylthioribose-1-phosphate isomerase (358 aa).

Residues 54–56 (RGA), arginine 96, and glutamine 205 each bind substrate. The active-site Proton donor is the aspartate 246. 256 to 257 (NK) provides a ligand contact to substrate.

This sequence belongs to the eIF-2B alpha/beta/delta subunits family. MtnA subfamily.

The catalysed reaction is 5-(methylsulfanyl)-alpha-D-ribose 1-phosphate = 5-(methylsulfanyl)-D-ribulose 1-phosphate. It participates in amino-acid biosynthesis; L-methionine biosynthesis via salvage pathway; L-methionine from S-methyl-5-thio-alpha-D-ribose 1-phosphate: step 1/6. Its function is as follows. Catalyzes the interconversion of methylthioribose-1-phosphate (MTR-1-P) into methylthioribulose-1-phosphate (MTRu-1-P). This is Methylthioribose-1-phosphate isomerase from Pseudomonas syringae pv. tomato (strain ATCC BAA-871 / DC3000).